Here is a 756-residue protein sequence, read N- to C-terminus: MSVVEIEEGVFESTATIDNGSFGTRTIRFETGRLARQAAGAVVAYLDDETMLLSATTASKQPKEHFDFFPLTIDVEERMYAAGRIPGSFFRREGRPSTDAILTCRLIDRPLRPTFISGLRNEIQVVVTVLSLDPKDLYDVLAINAASASTQISGIPFNGPVGGVRVALIDGQWVAFPTVEQLEKAVFDMVVAGRKVGDAGNEDVAIMMVEAEATDKVIELVAGGAGAPTEAVVAEGLEAAKPFIAALCDAQAALAGAAGKETAEYPVFPDYAEDVYYSVASVATDALSEALTIAGKEARDDRTNEIKAEVVERLAEQYAGREKEIGAAYRSLTKKLVRQRILTDHFRIDGRGVTDIRALSAEVAVIPRAHGSALFERGETQIMGVTTLDMVKMAQQIDSLGPETSKRYMHHYNFPPYSTGETGRVGSPKRREIGHGALAERALMPVLPSVEEFPYAIRQVSEALSSNGSTSMGSVCASTLSLLNAGVPLKAPVAGIAMGLVSDDVEVEGGGVERRFVTLTDILGAEDAFGDMDFKCAGTKDFVTALQLDTKLDGIPSQVLAGALAQAKDARITILEVMAEAIDEPDEMSPYAPRITTIKVPVDKIGEVIGPKGKMINSITEETGASISIEDDGTVFVGASNGEAAQAAIDKINAIANPQLPKVGERFLGTVVKTTDFGAFVSLLPGRDGLVHISKLGRGKRINKVEDVAKVGDKLRVEIADIDNRGKISLVLVAEEEAGAATPEAPAPADAATSSS.

Positions 527 and 533 each coordinate Mg(2+). The 60-residue stretch at 593–652 (PRITTIKVPVDKIGEVIGPKGKMINSITEETGASISIEDDGTVFVGASNGEAAQAAIDKI) folds into the KH domain. The 70-residue stretch at 664-733 (GERFLGTVVK…NRGKISLVLV (70 aa)) folds into the S1 motif domain.

It belongs to the polyribonucleotide nucleotidyltransferase family. It depends on Mg(2+) as a cofactor.

The protein resides in the cytoplasm. The enzyme catalyses RNA(n+1) + phosphate = RNA(n) + a ribonucleoside 5'-diphosphate. Its function is as follows. Involved in mRNA degradation. Catalyzes the phosphorolysis of single-stranded polyribonucleotides processively in the 3'- to 5'-direction. This Mycolicibacterium gilvum (strain PYR-GCK) (Mycobacterium gilvum (strain PYR-GCK)) protein is Polyribonucleotide nucleotidyltransferase.